A 211-amino-acid polypeptide reads, in one-letter code: Mitotic spindle assembly checkpoint protein MAD2B (211 aa).

One can recognise an HORMA domain in the interval 13–203 (QVVADILCEF…SDILKMQLYV (191 aa)).

In terms of assembly, homooligomer. Interacts with rev1. Interacts with rev3l. Interacts with fzr1 (in complex with the anaphase promoting complex APC). May interact with cdc20.

Its subcellular location is the nucleus. It localises to the cytoplasm. It is found in the cytoskeleton. The protein localises to the spindle. In terms of biological role, adapter protein able to interact with different proteins and involved in different biological processes. Mediates the interaction between the error-prone DNA polymerase zeta catalytic subunit rev3l and the inserter polymerase rev1, thereby mediating the second polymerase switching in translesion DNA synthesis. Translesion DNA synthesis releases the replication blockade of replicative polymerases, stalled in presence of DNA lesions. May also play a role in signal transduction in response to DNA damage. May regulate the activation of the anaphase promoting complex APC thereby regulating progression through the cell cycle. Through transcriptional regulation may play a role in epithelial-mesenchymal transdifferentiation. The sequence is that of Mitotic spindle assembly checkpoint protein MAD2B (mad2l2) from Xenopus tropicalis (Western clawed frog).